Reading from the N-terminus, the 407-residue chain is Frizzled/smoothened-like sans CRD protein J (407 aa).

The signal sequence occupies residues 1-23 (MKFLFSVILVIISFLGISKIVNG). Topologically, residues 24 to 89 (QIACPSPFLY…WNSFNKLVKQ (66 aa)) are extracellular. Asn-37 carries an N-linked (GlcNAc...) asparagine glycan. The chain crosses the membrane as a helical span at residues 90–110 (MGAVAFTCSAIIMIIYGPLMN). The Cytoplasmic portion of the chain corresponds to 111–120 (RSFFKFDRHT). Residues 121 to 141 (ITVFCFALSTFFIGVSDLMFA) form a helical membrane-spanning segment. At 142–169 (TNDVDMVCPESHRYARQTDKTCATNGVL) the chain is on the extracellular side. The chain crosses the membrane as a helical span at residues 170–190 (FQFGWLGSVMWFAFLSIDGFF). The Cytoplasmic segment spans residues 191–199 (RASGKKMNK). Residues 200–220 (IAFAIVLASIWILNIVLSFAP) form a helical membrane-spanning segment. The Extracellular segment spans residues 221–246 (MGGDQYGAYFVGQVNCWILVKNWQYA). Residues 247–267 (FFWAELIVSLAIGFVGICLTI) form a helical membrane-spanning segment. At 268–285 (YSLIRKTSDGNTLKHVTP) the chain is on the cytoplasmic side. A helical transmembrane segment spans residues 286 to 306 (LILVFLLFCQYLYMIIFYGII). Residues 307–354 (NEKKDHYQNILAEQVGCIFNNALAKMKVPGIVYAGECTFNETITFSSQ) lie on the Extracellular side of the membrane. Residue Asn-346 is glycosylated (N-linked (GlcNAc...) asparagine). Residues 355-375 (YAFLFFVRLLGIEIFAFYLFS) form a helical membrane-spanning segment. Over 376–407 (KETLLLIKSSYIATMFGLGDKDAYDVELEETD) the chain is Cytoplasmic.

This sequence belongs to the G-protein coupled receptor Fz/Smo family.

It is found in the membrane. The protein is Frizzled/smoothened-like sans CRD protein J (fscJ) of Dictyostelium discoideum (Social amoeba).